We begin with the raw amino-acid sequence, 312 residues long: MSTARKHTALPKAQILIEALPWLTRHHGRTVVIKFGGNAMIDEELKAAFAQDVVFLRHAGLKPVVVHGGGPQISAQLDKQGLVSEFKAGLRVTTPEAMDVVRMVLAGQVQRELVGLLNQHGPLAVGLTGEDAHTITAVQHRPTIDGELVDIGRVGEITAIDTGAIQALLDDGRIPVVSSIARSADDHHVYNVNADTAAAALAAALNAETLMVLTDVEGLYEDWPNSDDVISRLTASQLEKLLPELSSGMVPKMQGCLHAVRNGVETARVIDGRVQHSILLEIFTDEGIGTMVVPDAPIDVHAARTAHEQGAS.

Substrate is bound by residues 69–70, arginine 91, and asparagine 191; that span reads GG.

It belongs to the acetylglutamate kinase family. ArgB subfamily.

It localises to the cytoplasm. It carries out the reaction N-acetyl-L-glutamate + ATP = N-acetyl-L-glutamyl 5-phosphate + ADP. Its pathway is amino-acid biosynthesis; L-arginine biosynthesis; N(2)-acetyl-L-ornithine from L-glutamate: step 2/4. Its function is as follows. Catalyzes the ATP-dependent phosphorylation of N-acetyl-L-glutamate. The polypeptide is Acetylglutamate kinase (Streptomyces griseus subsp. griseus (strain JCM 4626 / CBS 651.72 / NBRC 13350 / KCC S-0626 / ISP 5235)).